Here is a 570-residue protein sequence, read N- to C-terminus: MNVVFAVKQYISKMIEDSGPGMKVLLMDKETTGIVSMVYTQSEILQKEVYLFERIDSQNREIMKHLKAICFLRPTKENVEYLIQELRRPKYSIYFIYFSNVISKSDVKSLAEADEQEVVAEVQEFYGDYIAVNPHLFSLNILGCCQGRNWDPAQLSRTTQGLTALLLSLKKCPMIRYQLSSEAAKRLGECVKQVISKEYELFEFRRTEVPPLLLILDRCDDAITPLLNQWTYQAMVHELLGINNNRIDLSRVPGISKDLREVVLSAENDEFYANNMYLNFAEIGSNIKNLMEDFQKKRPKEQQKLESIADMKAFVENYPQFKKMSGTVSKHVTVVGELSRLVSERNLLEVSEVEQELACQNDHSSALQNVKRLLQNPKVTEFDAVRLVMLYALHYERHSSNSLPGLIVDLRSKGVAEKYRKLVSAVVEYGGKRVRGSDLFSPKDAVAITKQFLKGLKGVENVYTQHQPFLHETLDHLIKGRLKENLYPYLGPSTLRDRPQDIIVFIIGGATYEEALTVYNLNRTTPGVRIVLGGTTIHNTKSFLEEVLASGLHSRSRESSQATSRSANRR.

Phosphoserine is present on residues serine 307 and serine 441.

Belongs to the STXBP/unc-18/SEC1 family. Interacts with ZFYVE20. Interacts with STX6.

It is found in the golgi apparatus membrane. It localises to the endosome membrane. May play a role in vesicle-mediated protein trafficking from the Golgi stack through the trans-Golgi network. This Mus musculus (Mouse) protein is Vacuolar protein sorting-associated protein 45 (Vps45).